Reading from the N-terminus, the 258-residue chain is tRNA (guanine-N(7)-)-methyltransferase (258 aa).

Residues G76, 99 to 100 (EI), 132 to 133 (NA), and L152 contribute to the S-adenosyl-L-methionine site. D155 is a catalytic residue. 230–232 (TEE) provides a ligand contact to S-adenosyl-L-methionine.

This sequence belongs to the class I-like SAM-binding methyltransferase superfamily. TrmB family.

It is found in the nucleus. The enzyme catalyses guanosine(46) in tRNA + S-adenosyl-L-methionine = N(7)-methylguanosine(46) in tRNA + S-adenosyl-L-homocysteine. The protein operates within tRNA modification; N(7)-methylguanine-tRNA biosynthesis. In terms of biological role, catalyzes the formation of N(7)-methylguanine at position 46 (m7G46) in tRNA. The chain is tRNA (guanine-N(7)-)-methyltransferase from Brugia malayi (Filarial nematode worm).